Consider the following 320-residue polypeptide: Malate dehydrogenase (320 aa).

Residues glycine 10–glycine 15 and aspartate 34 contribute to the NAD(+) site. Positions 83 and 89 each coordinate substrate. NAD(+) is bound by residues asparagine 96 and isoleucine 119–asparagine 121. The substrate site is built by asparagine 121 and arginine 152. Histidine 176 acts as the Proton acceptor in catalysis.

It belongs to the LDH/MDH superfamily. MDH type 3 family.

It carries out the reaction (S)-malate + NAD(+) = oxaloacetate + NADH + H(+). Its function is as follows. Catalyzes the reversible oxidation of malate to oxaloacetate. In Dinoroseobacter shibae (strain DSM 16493 / NCIMB 14021 / DFL 12), this protein is Malate dehydrogenase.